A 601-amino-acid chain; its full sequence is Elongation factor 4 (601 aa).

The region spanning 7 to 189 (ELIRNFSIIA…ALVTRLPPPK (183 aa)) is the tr-type G domain. Residues 19–24 (DHGKST) and 136–139 (NKID) each bind GTP.

This sequence belongs to the TRAFAC class translation factor GTPase superfamily. Classic translation factor GTPase family. LepA subfamily.

The protein localises to the cell inner membrane. The catalysed reaction is GTP + H2O = GDP + phosphate + H(+). In terms of biological role, required for accurate and efficient protein synthesis under certain stress conditions. May act as a fidelity factor of the translation reaction, by catalyzing a one-codon backward translocation of tRNAs on improperly translocated ribosomes. Back-translocation proceeds from a post-translocation (POST) complex to a pre-translocation (PRE) complex, thus giving elongation factor G a second chance to translocate the tRNAs correctly. Binds to ribosomes in a GTP-dependent manner. The protein is Elongation factor 4 of Acidiphilium cryptum (strain JF-5).